The primary structure comprises 432 residues: Bifunctional protein GlmU (432 aa).

Residues 1 to 223 (MGKKSIIILA…EENFKGVNSK (223 aa)) are pyrophosphorylase. UDP-N-acetyl-alpha-D-glucosamine contacts are provided by residues 9 to 12 (LAAG), Lys-23, Gln-75, and 82 to 83 (GT). Asp-103 contributes to the Mg(2+) binding site. Positions 135, 149, 164, and 221 each coordinate UDP-N-acetyl-alpha-D-glucosamine. Asn-221 provides a ligand contact to Mg(2+). A linker region spans residues 224-244 (VELADAEVIHQNRIKKEFMKA). An N-acetyltransferase region spans residues 245-432 (GVIMRLPDTI…FYKHFSSKKK (188 aa)). The UDP-N-acetyl-alpha-D-glucosamine site is built by Arg-308 and Lys-325. His-336 (proton acceptor) is an active-site residue. The UDP-N-acetyl-alpha-D-glucosamine site is built by Tyr-339 and Asn-350. Residues 359–360 (NY), Ser-378, Ala-396, and Arg-413 each bind acetyl-CoA.

The protein in the N-terminal section; belongs to the N-acetylglucosamine-1-phosphate uridyltransferase family. In the C-terminal section; belongs to the transferase hexapeptide repeat family. Homotrimer. Mg(2+) serves as cofactor.

Its subcellular location is the cytoplasm. The catalysed reaction is alpha-D-glucosamine 1-phosphate + acetyl-CoA = N-acetyl-alpha-D-glucosamine 1-phosphate + CoA + H(+). The enzyme catalyses N-acetyl-alpha-D-glucosamine 1-phosphate + UTP + H(+) = UDP-N-acetyl-alpha-D-glucosamine + diphosphate. It participates in nucleotide-sugar biosynthesis; UDP-N-acetyl-alpha-D-glucosamine biosynthesis; N-acetyl-alpha-D-glucosamine 1-phosphate from alpha-D-glucosamine 6-phosphate (route II): step 2/2. It functions in the pathway nucleotide-sugar biosynthesis; UDP-N-acetyl-alpha-D-glucosamine biosynthesis; UDP-N-acetyl-alpha-D-glucosamine from N-acetyl-alpha-D-glucosamine 1-phosphate: step 1/1. Its pathway is bacterial outer membrane biogenesis; LPS lipid A biosynthesis. Catalyzes the last two sequential reactions in the de novo biosynthetic pathway for UDP-N-acetylglucosamine (UDP-GlcNAc). The C-terminal domain catalyzes the transfer of acetyl group from acetyl coenzyme A to glucosamine-1-phosphate (GlcN-1-P) to produce N-acetylglucosamine-1-phosphate (GlcNAc-1-P), which is converted into UDP-GlcNAc by the transfer of uridine 5-monophosphate (from uridine 5-triphosphate), a reaction catalyzed by the N-terminal domain. The protein is Bifunctional protein GlmU of Aliarcobacter butzleri (strain RM4018) (Arcobacter butzleri).